Here is a 142-residue protein sequence, read N- to C-terminus: uncharacterized protein (142 aa).

Helical transmembrane passes span 75–97 (VFFR…YIVA) and 107–124 (LSIV…KLFY).

It localises to the cell membrane. This is an uncharacterized protein from Archaeoglobus fulgidus (strain ATCC 49558 / DSM 4304 / JCM 9628 / NBRC 100126 / VC-16).